Consider the following 669-residue polypeptide: Major S-layer protein (669 aa).

A signal peptide spans M1–A24. Residues N36, N70, N116, N600, and N607 are each glycosylated (N-linked (GlcNAc...) asparagine). Residues D588 to G648 are disordered. The span at E590–T627 shows a compositional bias: acidic residues. The helical transmembrane segment at T645 to V665 threads the bilayer.

It belongs to the Methanosarcinales S-layer protein family. Post-translationally, glycosylated.

The protein resides in the secreted. It localises to the cell wall. It is found in the S-layer. The protein localises to the cell membrane. Functionally, S-layer protein. The S-layer is a paracrystalline mono-layered assembly of proteins which coat the surface of the cell. This is Major S-layer protein from Methanosarcina mazei (strain ATCC BAA-159 / DSM 3647 / Goe1 / Go1 / JCM 11833 / OCM 88) (Methanosarcina frisia).